We begin with the raw amino-acid sequence, 288 residues long: 33 kDa chaperonin (288 aa).

Intrachain disulfides connect C237–C239 and C270–C273.

It belongs to the HSP33 family. Post-translationally, under oxidizing conditions two disulfide bonds are formed involving the reactive cysteines. Under reducing conditions zinc is bound to the reactive cysteines and the protein is inactive.

It localises to the cytoplasm. In terms of biological role, redox regulated molecular chaperone. Protects both thermally unfolding and oxidatively damaged proteins from irreversible aggregation. Plays an important role in the bacterial defense system toward oxidative stress. The sequence is that of 33 kDa chaperonin from Agathobacter rectalis (strain ATCC 33656 / DSM 3377 / JCM 17463 / KCTC 5835 / VPI 0990) (Eubacterium rectale).